The following is a 160-amino-acid chain: Inorganic pyrophosphatase (160 aa).

Substrate contacts are provided by K16, R28, and Y40. Residues D50, D55, and D87 each coordinate Mg(2+). Y126 serves as a coordination point for substrate.

It belongs to the PPase family. As to quaternary structure, homohexamer. Mg(2+) serves as cofactor.

It is found in the cytoplasm. The catalysed reaction is diphosphate + H2O = 2 phosphate + H(+). In terms of biological role, catalyzes the hydrolysis of inorganic pyrophosphate (PPi) forming two phosphate ions. This Nanoarchaeum equitans (strain Kin4-M) protein is Inorganic pyrophosphatase.